The chain runs to 526 residues: Cytochrome P450 monooxygenase 226 (526 aa).

A helical transmembrane segment spans residues 15 to 35 (FATSYAALTVAAVTLLAALLV). N-linked (GlcNAc...) asparagine glycosylation is found at asparagine 219, asparagine 277, and asparagine 320. Cysteine 452 lines the heme pocket.

It belongs to the cytochrome P450 family. Requires heme as cofactor.

The protein resides in the membrane. Its pathway is secondary metabolite biosynthesis. Its function is as follows. Cytochrome P450 monooxygenase that is able to use anthracene, carbazole and phenanthrene as substrates for oxidation. These multifunctional properties against a series of polycyclic aromatic hydrocarbons (PAHs) suggest that CYP226 would play important roles, at least in part, in fungal metabolic systems involved in xenobiotic detoxification. In Postia placenta (strain ATCC 44394 / Madison 698-R) (Brown rot fungus), this protein is Cytochrome P450 monooxygenase 226.